We begin with the raw amino-acid sequence, 263 residues long: 4-hydroxy-tetrahydrodipicolinate reductase (263 aa).

Residues 7–12, 96–98, and 122–125 each bind NAD(+); these read GFKGRM, GTT, and APNF. His-152 (proton donor/acceptor) is an active-site residue. Position 153 (His-153) interacts with (S)-2,3,4,5-tetrahydrodipicolinate. Lys-156 functions as the Proton donor in the catalytic mechanism. Residue 162 to 163 coordinates (S)-2,3,4,5-tetrahydrodipicolinate; that stretch reads GT.

The protein belongs to the DapB family.

The protein resides in the cytoplasm. The catalysed reaction is (S)-2,3,4,5-tetrahydrodipicolinate + NAD(+) + H2O = (2S,4S)-4-hydroxy-2,3,4,5-tetrahydrodipicolinate + NADH + H(+). The enzyme catalyses (S)-2,3,4,5-tetrahydrodipicolinate + NADP(+) + H2O = (2S,4S)-4-hydroxy-2,3,4,5-tetrahydrodipicolinate + NADPH + H(+). It participates in amino-acid biosynthesis; L-lysine biosynthesis via DAP pathway; (S)-tetrahydrodipicolinate from L-aspartate: step 4/4. Functionally, catalyzes the conversion of 4-hydroxy-tetrahydrodipicolinate (HTPA) to tetrahydrodipicolinate. This is 4-hydroxy-tetrahydrodipicolinate reductase from Listeria monocytogenes serovar 1/2a (strain ATCC BAA-679 / EGD-e).